Consider the following 294-residue polypeptide: ATP synthase gamma chain (294 aa).

This sequence belongs to the ATPase gamma chain family. As to quaternary structure, F-type ATPases have 2 components, CF(1) - the catalytic core - and CF(0) - the membrane proton channel. CF(1) has five subunits: alpha(3), beta(3), gamma(1), delta(1), epsilon(1). CF(0) has three main subunits: a, b and c.

It localises to the cell inner membrane. Functionally, produces ATP from ADP in the presence of a proton gradient across the membrane. The gamma chain is believed to be important in regulating ATPase activity and the flow of protons through the CF(0) complex. The chain is ATP synthase gamma chain from Campylobacter jejuni subsp. doylei (strain ATCC BAA-1458 / RM4099 / 269.97).